The chain runs to 847 residues: Acyl-homoserine lactone acylase QuiP (847 aa).

The signal sequence occupies residues 1–26 (MASPAFMRFLPRCGAAAAFGTLLGLA). Serine 265 acts as the Nucleophile in catalysis.

It belongs to the peptidase S45 family. Heterodimer of an alpha subunit and a beta subunit processed from the same precursor.

It localises to the periplasm. It catalyses the reaction an N-acyl-L-homoserine lactone + H2O = L-homoserine lactone + a carboxylate. Its function is as follows. Catalyzes the deacylation of acyl-homoserine lactone (AHL or acyl-HSL), releasing homoserine lactone (HSL) and the corresponding fatty acid. Possesses a specificity for the degradation of long-chain acyl-HSLs (side chains of seven or more carbons in length). Appears to be the acyl-HSL acylase that underlies the ability of P.aeruginosa to degrade and utilize certain acyl-HSLs as growth nutrients, including one of its own quorum signals, 3-oxo-C12-HSL. Is thought to have a role in quorum quenching. The protein is Acyl-homoserine lactone acylase QuiP (quiP) of Pseudomonas aeruginosa (strain ATCC 15692 / DSM 22644 / CIP 104116 / JCM 14847 / LMG 12228 / 1C / PRS 101 / PAO1).